The sequence spans 328 residues: Fructosamine deglycase FrlB (328 aa).

2 SIS domains span residues 15 to 153 and 181 to 311; these read FLQD…VLEN and NAKQ…ELAE.

Homooctamer.

Its function is as follows. Catalyzes the conversion of a range of fructosamine 6-phosphates to glucose 6-phosphate and a free amino acid. The protein is Fructosamine deglycase FrlB (frlB) of Bacillus subtilis (strain 168).